A 51-amino-acid polypeptide reads, in one-letter code: Large ribosomal subunit protein eL39z/eL39x (51 aa).

Residues 1–21 form a disordered region; it reads MPSHKSFMIKKKLGKKMRQNR. Residues 7–19 show a composition bias toward basic residues; that stretch reads FMIKKKLGKKMRQ.

It belongs to the eukaryotic ribosomal protein eL39 family.

The sequence is that of Large ribosomal subunit protein eL39z/eL39x (RPL39A) from Arabidopsis thaliana (Mouse-ear cress).